Consider the following 141-residue polypeptide: Large ribosomal subunit protein uL16 (141 aa).

Residues 1–21 (MLMPKRVKYRKQQRGHNRGMA) form a disordered region.

The protein belongs to the universal ribosomal protein uL16 family. Part of the 50S ribosomal subunit.

Functionally, binds 23S rRNA and is also seen to make contacts with the A and possibly P site tRNAs. The chain is Large ribosomal subunit protein uL16 from Roseiflexus castenholzii (strain DSM 13941 / HLO8).